The following is a 70-amino-acid chain: Small ribosomal subunit protein bS18c (70 aa).

It belongs to the bacterial ribosomal protein bS18 family. Part of the 30S ribosomal subunit.

The protein localises to the plastid. Its subcellular location is the chloroplast. This chain is Small ribosomal subunit protein bS18c, found in Pyropia yezoensis (Susabi-nori).